The sequence spans 116 residues: Tyrosine-protein phosphatase 10 (116 aa).

A Tyrosine-protein phosphatase domain is found at Trp-1–Val-116. A substrate-binding site is contributed by Asp-86.

It belongs to the protein-tyrosine phosphatase family.

It carries out the reaction O-phospho-L-tyrosyl-[protein] + H2O = L-tyrosyl-[protein] + phosphate. In Styela plicata (Wrinkled sea squirt), this protein is Tyrosine-protein phosphatase 10 (STY-10).